The sequence spans 106 residues: Small membrane A-kinase anchor protein (106 aa).

Gly2 carries N-myristoyl glycine lipidation. Cys3 is lipidated: S-palmitoyl cysteine. Phosphoserine is present on Ser40. The interval 62–85 is PKA-RI-binding; sequence ALILEFADRLASEIVEDALQQWAC. Ser98 carries the post-translational modification Phosphoserine.

This sequence belongs to the small membrane AKAP family. Interacts with PKA type I regulatory subunits PRKAR1A and PRKAR1B. Also binds to type II regulatory subunits, but at a tenfold lower affinity. Post-translationally, may be palmitoylated at Cys-3. In terms of tissue distribution, widely expressed, with very low levels in spleen and liver.

Its subcellular location is the cell membrane. Its function is as follows. Binds to type I regulatory subunits of protein kinase A (PKA-RI) and may anchor/target them to the plasma membrane. The sequence is that of Small membrane A-kinase anchor protein from Mus musculus (Mouse).